The chain runs to 514 residues: ATP synthase subunit alpha (514 aa).

Position 170–177 (170–177 (GDRQIGKT)) interacts with ATP.

It belongs to the ATPase alpha/beta chains family. F-type ATPases have 2 components, CF(1) - the catalytic core - and CF(0) - the membrane proton channel. CF(1) has five subunits: alpha(3), beta(3), gamma(1), delta(1), epsilon(1). CF(0) has three main subunits: a(1), b(2) and c(9-12). The alpha and beta chains form an alternating ring which encloses part of the gamma chain. CF(1) is attached to CF(0) by a central stalk formed by the gamma and epsilon chains, while a peripheral stalk is formed by the delta and b chains.

The protein resides in the cell inner membrane. The catalysed reaction is ATP + H2O + 4 H(+)(in) = ADP + phosphate + 5 H(+)(out). Its function is as follows. Produces ATP from ADP in the presence of a proton gradient across the membrane. The alpha chain is a regulatory subunit. This chain is ATP synthase subunit alpha, found in Pseudomonas aeruginosa (strain LESB58).